Consider the following 334-residue polypeptide: Putative heat shock protein HSP 90-alpha A5 (334 aa).

Residues 55 to 107 (KRNKQVSDAEAEKKEDKRKKKKESNDKPEIEDVGSDEEEEKKDADKKKKKSKE) are disordered. Residues 59 to 69 (QVSDAEAEKKE) are compositionally biased toward basic and acidic residues. The span at 85–94 (EDVGSDEEEE) shows a compositional bias: acidic residues. Residue Ser89 is modified to Phosphoserine. A coiled-coil region spans residues 234-267 (LELPEDEEEKKKQEEKKTKFENLCKIMKDMLEKK). The disordered stretch occupies residues 314–334 (EMPPLRGGDDTSRMEEVGGSG). A compositionally biased stretch (basic and acidic residues) spans 320–334 (GGDDTSRMEEVGGSG). Positions 327–331 (MEEVG) match the TPR repeat-binding motif.

It belongs to the heat shock protein 90 family. Homodimer.

It is found in the cytoplasm. Functionally, putative molecular chaperone that may promote the maturation, structural maintenance and proper regulation of specific target proteins. This Homo sapiens (Human) protein is Putative heat shock protein HSP 90-alpha A5 (HSP90AA5P).